The chain runs to 134 residues: Phosphoribosyl-AMP cyclohydrolase (134 aa).

Residue Asp-78 participates in Mg(2+) binding. Cys-79 serves as a coordination point for Zn(2+). 2 residues coordinate Mg(2+): Asp-80 and Asp-82. Residues Cys-96 and Cys-103 each contribute to the Zn(2+) site.

This sequence belongs to the PRA-CH family. In terms of assembly, homodimer. It depends on Mg(2+) as a cofactor. Zn(2+) is required as a cofactor.

Its subcellular location is the cytoplasm. It catalyses the reaction 1-(5-phospho-beta-D-ribosyl)-5'-AMP + H2O = 1-(5-phospho-beta-D-ribosyl)-5-[(5-phospho-beta-D-ribosylamino)methylideneamino]imidazole-4-carboxamide. It functions in the pathway amino-acid biosynthesis; L-histidine biosynthesis; L-histidine from 5-phospho-alpha-D-ribose 1-diphosphate: step 3/9. Functionally, catalyzes the hydrolysis of the adenine ring of phosphoribosyl-AMP. In Cupriavidus necator (strain ATCC 17699 / DSM 428 / KCTC 22496 / NCIMB 10442 / H16 / Stanier 337) (Ralstonia eutropha), this protein is Phosphoribosyl-AMP cyclohydrolase.